A 473-amino-acid chain; its full sequence is Phenolic acid decarboxylase (473 aa).

Residues N160, H182, and E224 each coordinate Mn(2+). Residues 160 to 165 and 181 to 182 contribute to the prenylated FMN site; these read NVGIYR and QH. The Proton donor role is filled by E273.

This sequence belongs to the UbiD family. YclC subfamily. Prenylated FMN is required as a cofactor. It depends on Mn(2+) as a cofactor.

It catalyses the reaction 4-hydroxybenzoate + H(+) = phenol + CO2. The catalysed reaction is vanillate + H(+) = guaiacol + CO2. Involved in the non-oxidative decarboxylation and detoxification of phenolic derivatives under both aerobic and anaerobic conditions. Phenolic acid decarboxylase that catalyzes the reversible decarboxylation of 4-hydroxybenzoate and vanillate. Could also catalyze the decarboxylation of salicylate. Is not active on di- and tri-hydroxybenzoate derivatives. The protein is Phenolic acid decarboxylase of Bacillus subtilis (strain 168).